The primary structure comprises 176 residues: RNA 2',3'-cyclic phosphodiesterase (176 aa).

Histidine 39 serves as the catalytic Proton donor. 2 consecutive short sequence motifs (HXTX) follow at residues 39-42 and 122-125; these read HITL and HLTV. The active-site Proton acceptor is the histidine 122.

This sequence belongs to the 2H phosphoesterase superfamily. ThpR family.

It carries out the reaction a 3'-end 2',3'-cyclophospho-ribonucleotide-RNA + H2O = a 3'-end 2'-phospho-ribonucleotide-RNA + H(+). Its function is as follows. Hydrolyzes RNA 2',3'-cyclic phosphodiester to an RNA 2'-phosphomonoester. In Archaeoglobus fulgidus (strain ATCC 49558 / DSM 4304 / JCM 9628 / NBRC 100126 / VC-16), this protein is RNA 2',3'-cyclic phosphodiesterase.